We begin with the raw amino-acid sequence, 470 residues long: Ribulose bisphosphate carboxylase large chain (470 aa).

Substrate is bound by residues N115 and T165. Catalysis depends on K167, which acts as the Proton acceptor. K169 contacts substrate. Positions 193, 195, and 196 each coordinate Mg(2+). Residue K193 is modified to N6-carboxylysine. Catalysis depends on H286, which acts as the Proton acceptor. Residues R287, H319, and S371 each coordinate substrate.

The protein belongs to the RuBisCO large chain family. Type I subfamily. Heterohexadecamer of 8 large chains and 8 small chains. The cofactor is Mg(2+).

It is found in the carboxysome. The catalysed reaction is 2 (2R)-3-phosphoglycerate + 2 H(+) = D-ribulose 1,5-bisphosphate + CO2 + H2O. The enzyme catalyses D-ribulose 1,5-bisphosphate + O2 = 2-phosphoglycolate + (2R)-3-phosphoglycerate + 2 H(+). Its function is as follows. RuBisCO catalyzes two reactions: the carboxylation of D-ribulose 1,5-bisphosphate, the primary event in carbon dioxide fixation, as well as the oxidative fragmentation of the pentose substrate in the photorespiration process. Both reactions occur simultaneously and in competition at the same active site. In Prochlorococcus marinus (strain SARG / CCMP1375 / SS120), this protein is Ribulose bisphosphate carboxylase large chain.